Reading from the N-terminus, the 230-residue chain is Small ribosomal subunit protein uS3 (230 aa).

One can recognise a KH type-2 domain in the interval 39-107 (VRKFLEKKLE…PAQINIAEIR (69 aa)).

This sequence belongs to the universal ribosomal protein uS3 family. In terms of assembly, part of the 30S ribosomal subunit. Forms a tight complex with proteins S10 and S14.

Functionally, binds the lower part of the 30S subunit head. Binds mRNA in the 70S ribosome, positioning it for translation. This is Small ribosomal subunit protein uS3 from Shewanella amazonensis (strain ATCC BAA-1098 / SB2B).